Reading from the N-terminus, the 587-residue chain is Pyruvate decarboxylase 3 (587 aa).

2 residues coordinate substrate: D48 and H135. Residues 415–496 (DSWFNCQKLR…FLINNGGYTI (82 aa)) form a thiamine pyrophosphate binding region. Residues D464, N491, and G493 each contribute to the Mg(2+) site. E497 serves as a coordination point for substrate.

This sequence belongs to the TPP enzyme family. As to quaternary structure, homotetramer. The cofactor is a metal cation. Thiamine diphosphate serves as cofactor.

The enzyme catalyses a 2-oxocarboxylate + H(+) = an aldehyde + CO2. This Oryza sativa subsp. japonica (Rice) protein is Pyruvate decarboxylase 3 (PDC3).